The chain runs to 436 residues: Trigger factor (436 aa).

The region spanning 163–248 is the PPIase FKBP-type domain; the sequence is GDRVVLDFAG…VKEVAEGVLP (86 aa).

Belongs to the FKBP-type PPIase family. Tig subfamily.

The protein localises to the cytoplasm. It catalyses the reaction [protein]-peptidylproline (omega=180) = [protein]-peptidylproline (omega=0). Functionally, involved in protein export. Acts as a chaperone by maintaining the newly synthesized protein in an open conformation. Functions as a peptidyl-prolyl cis-trans isomerase. This is Trigger factor from Bordetella bronchiseptica (strain ATCC BAA-588 / NCTC 13252 / RB50) (Alcaligenes bronchisepticus).